The sequence spans 294 residues: Lipoyl synthase (294 aa).

[4Fe-4S] cluster is bound by residues Cys-35, Cys-40, Cys-46, Cys-61, Cys-65, Cys-68, and Ser-275. Residues 46-264 (CWGGGTATVM…RDQGLALGFR (219 aa)) enclose the Radical SAM core domain.

Belongs to the radical SAM superfamily. Lipoyl synthase family. It depends on [4Fe-4S] cluster as a cofactor.

It localises to the cytoplasm. The catalysed reaction is [[Fe-S] cluster scaffold protein carrying a second [4Fe-4S](2+) cluster] + N(6)-octanoyl-L-lysyl-[protein] + 2 oxidized [2Fe-2S]-[ferredoxin] + 2 S-adenosyl-L-methionine + 4 H(+) = [[Fe-S] cluster scaffold protein] + N(6)-[(R)-dihydrolipoyl]-L-lysyl-[protein] + 4 Fe(3+) + 2 hydrogen sulfide + 2 5'-deoxyadenosine + 2 L-methionine + 2 reduced [2Fe-2S]-[ferredoxin]. Its pathway is protein modification; protein lipoylation via endogenous pathway; protein N(6)-(lipoyl)lysine from octanoyl-[acyl-carrier-protein]: step 2/2. Its function is as follows. Catalyzes the radical-mediated insertion of two sulfur atoms into the C-6 and C-8 positions of the octanoyl moiety bound to the lipoyl domains of lipoate-dependent enzymes, thereby converting the octanoylated domains into lipoylated derivatives. This is Lipoyl synthase from Anaeromyxobacter dehalogenans (strain 2CP-C).